Reading from the N-terminus, the 566-residue chain is Membrane protein insertase YidC (566 aa).

A helical transmembrane segment spans residues 7 to 27 (ILIVALAIVSYVMVLKWNQDY). The tract at residues 38–72 (ASSTTAPGLPDAPTGTSAANDDIPRAASDTTAPAE) is disordered. Transmembrane regions (helical) follow at residues 347–367 (LELTVDYGFLWFIAQPIFWLL), 373–393 (LVGNWGWSIIFLTMLIKGIFF), 443–463 (LGGCLPILVQMPVFLSLYWVL), 474–494 (FMLWITDLSIKDPFFILPIIM), and 521–541 (PIIFTFFFLWFPAGLVLYWVV).

The protein belongs to the OXA1/ALB3/YidC family. Type 1 subfamily. In terms of assembly, interacts with the Sec translocase complex via SecD. Specifically interacts with transmembrane segments of nascent integral membrane proteins during membrane integration.

It is found in the cell inner membrane. Required for the insertion and/or proper folding and/or complex formation of integral membrane proteins into the membrane. Involved in integration of membrane proteins that insert both dependently and independently of the Sec translocase complex, as well as at least some lipoproteins. Aids folding of multispanning membrane proteins. This is Membrane protein insertase YidC from Pseudomonas fluorescens (strain ATCC BAA-477 / NRRL B-23932 / Pf-5).